Here is a 187-residue protein sequence, read N- to C-terminus: Calmodulin-like protein 30 (187 aa).

Residues K21 to S47 are disordered. Positions S32 to S47 are enriched in low complexity. EF-hand domains follow at residues P46–E81, R82–I117, F129–R152, and C153–V187. D59, D61, D63, K65, E70, D95, D97, D99, E106, D130, N132, D134, K136, E141, D166, D168, D170, and E177 together coordinate Ca(2+).

This sequence belongs to the calmodulin family.

In terms of biological role, potential calcium sensor. The sequence is that of Calmodulin-like protein 30 from Arabidopsis thaliana (Mouse-ear cress).